Here is a 490-residue protein sequence, read N- to C-terminus: MTKALLKDLNARDAPLREQLEQEATSLPKIVLSERQFCDVELILNGGFSPLDGFMNQKDYLNVVENLRLSTGEVFPIPITLDLNESQADSLKAGDRVALLDPRDGQTVIAILTVEDKYTPDKANEAEKVFGANDRAHPAVDYLFGRAGNVYVGGKLQAVTPIRHFDFVEYRYSPAQLRSDFQRNNWNRVVAFQTRNPMHRAHRELTVRAAKQHGARVLIHPVVGMTKPGDIDHFTRVRVYEAILQRYPKGSAKLSLLPLAMRMAGPREALWHAIIRKNYGASHFIIGRDHAGPGKNSQGEDFYGPYDAQYLVEQYAQEIGITIVPFQMMTYLPDEDIYKPVDKVEPGTRTLNISGTELRRRLRVGANIPEWFSYPEVVAILRQSYPPKYSQGFVLAVPATSDKLLPSALVSALNEDGRRHVTLLPRLDAISVFYAQELQRAGAAVVVSLADADASVKVPAEWTTVNIKPKDSVSEVTFAVLSQLSDEGYL.

The N-terminal stretch occupies residues 1-165 (MTKALLKDLN…LQAVTPIRHF (165 aa)). The catalytic stretch occupies residues 166–390 (DFVEYRYSPA…LRQSYPPKYS (225 aa)). Gln193 is a sulfate binding site. Residues 193–196 (QTRN) and 287–290 (GRDH) each bind ATP. Active-site residues include Thr194, Arg195, and Asn196. Position 195 (Arg195) interacts with sulfate. Ala291 contributes to the sulfate binding site. Met329 provides a ligand contact to ATP. Position 356 is a phosphothreonine (Thr356). The segment at 391-490 (QGFVLAVPAT…LSQLSDEGYL (100 aa)) is required for oligomerization; adenylyl-sulfate kinase-like.

Belongs to the sulfate adenylyltransferase family. Homohexamer. Dimer of trimers.

It localises to the cytoplasm. The catalysed reaction is sulfate + ATP + H(+) = adenosine 5'-phosphosulfate + diphosphate. The protein operates within sulfur metabolism; hydrogen sulfide biosynthesis; sulfite from sulfate: step 1/3. Its function is as follows. Catalyzes the first intracellular reaction of sulfate assimilation, forming adenosine-5'-phosphosulfate (APS) from inorganic sulfate and ATP. Plays an important role in sulfate activation as a component of the biosynthesis pathway of sulfur-containing amino acids. The protein is Sulfate adenylyltransferase (sua1) of Schizosaccharomyces pombe (strain 972 / ATCC 24843) (Fission yeast).